The sequence spans 453 residues: Gastrin/cholecystokinin type B receptor (453 aa).

The Extracellular segment spans residues 1 to 57 (MDLLKLNRSLQGPGPGSGSSLCRPGVSLLNSSSAGNLSCETPRIRGTGTRELELTIR). N-linked (GlcNAc...) asparagine glycans are attached at residues N7, N30, and N36. Residues 58–79 (ITLYAVIFLMSVGGNVLIIVVL) form a helical membrane-spanning segment. Residues 80-87 (GLSRRLRT) are Cytoplasmic-facing. Residues 88–109 (VTNAFLLSLAVSDLLLAVACMP) form a helical membrane-spanning segment. The Extracellular portion of the chain corresponds to 110–131 (FTLLPNLMGTFIFGTVICKAVS). A disulfide bond links C127 and C205. The chain crosses the membrane as a helical span at residues 132 to 150 (YLMGVSVSVSTLNLAAIAL). Residues 151–170 (ERYSAICRPLQARVWQTRSH) are Cytoplasmic-facing. The chain crosses the membrane as a helical span at residues 171–189 (AARVILATWLLSGLLMVPY). Over 190 to 219 (PVYTVVQPVGPRILQCMHLWPSERVQQMWS) the chain is Extracellular. Residues 220 to 242 (VLLLILLFFIPGVVMAVAYGLIS) form a helical membrane-spanning segment. At 243–339 (RELYLGLRFD…KLLAKKRVVR (97 aa)) the chain is on the cytoplasmic side. A disordered region spans residues 257 to 276 (SETQSRVRNQGGLPGGAAAP). Residues 340 to 361 (MLLVIVLLFFVCWLPVYSANTW) traverse the membrane as a helical segment. At 362–379 (RAFDGPGARRALAGAPIS) the chain is on the extracellular side. A helical transmembrane segment spans residues 380 to 400 (FIHLLSYTSACANPLVYCFMH). Topologically, residues 401 to 453 (RRFRQACLDTCARCCPRPPRARPRPLPDEDPPTPSIASLSRLSYTTISTLGPG) are cytoplasmic. Residue C414 is the site of S-palmitoyl cysteine attachment.

It belongs to the G-protein coupled receptor 1 family.

Its subcellular location is the cell membrane. Functionally, receptor for gastrin and cholecystokinin. The CCK-B receptors occur throughout the central nervous system where they modulate anxiety, analgesia, arousal, and neuroleptic activity. This receptor mediates its action by association with G proteins that activate a phosphatidylinositol-calcium second messenger system. This chain is Gastrin/cholecystokinin type B receptor (Cckbr), found in Mus musculus (Mouse).